The sequence spans 172 residues: Spore coat protein X (172 aa).

The protein localises to the spore coat. This Bacillus subtilis (strain 168) protein is Spore coat protein X (cotX).